A 347-amino-acid chain; its full sequence is Spermatogenesis associated 6-like protein (347 aa).

The segment at Ser-115–Lys-199 is disordered. Residues Lys-116 to Thr-125 show a composition bias toward polar residues. Residues Leu-153–Ser-166 are compositionally biased toward basic residues. Over residues Pro-170–Asp-183 the composition is skewed to basic and acidic residues. Phosphoserine occurs at positions 218 and 221. Residues Glu-234 to Pro-285 are disordered. The span at Pro-254–Arg-277 shows a compositional bias: polar residues.

This sequence belongs to the SPATA6 family.

This Mus musculus (Mouse) protein is Spermatogenesis associated 6-like protein (Spata6l).